The following is a 429-amino-acid chain: SVP1-like protein 2 (429 aa).

WD repeat units follow at residues 10–48, 50–96, 178–218, and 223–262; these read PVLA…LRTS, DFGA…QVGV, AHTS…RLYE, and IDKA…GTRP. Positions 262–297 are disordered; the sequence is PITSNGGTAYAAGEPSVTGNNRPSSPYSVASSSGGG.

It belongs to the WD repeat PROPPIN family.

The protein resides in the vacuole membrane. It is found in the cytoplasmic vesicle membrane. Involved in mitochondrial or peroxisomal functions and amino acid signaling pathways. This Neurospora crassa (strain ATCC 24698 / 74-OR23-1A / CBS 708.71 / DSM 1257 / FGSC 987) protein is SVP1-like protein 2 (apg-14).